The sequence spans 296 residues: Hca operon transcriptional activator HcaR (296 aa).

An HTH lysR-type domain is found at 1–58 (MELRHLRYFVAVAQALNFTRAAEKLHTSQPSLSSQIRDLENCVGVPLLVRDKRKVALT). The H-T-H motif DNA-binding region spans 18 to 38 (FTRAAEKLHTSQPSLSSQIRD).

The protein belongs to the LysR transcriptional regulatory family.

Its function is as follows. Transcriptional activator of the hca operon for 3-phenylpropionic acid catabolism. This chain is Hca operon transcriptional activator HcaR (hcaR), found in Escherichia coli (strain K12).